Consider the following 455-residue polypeptide: Squamosa promoter-binding-like protein 16 (455 aa).

The SBP-type zinc finger occupies 115–192 (CPSCAVDGCK…DGHNRRRRKP (78 aa)). Residues Cys-118, Cys-123, Cys-140, His-143, Cys-159, Cys-162, His-166, and Cys-178 each contribute to the Zn(2+) site. Positions 175–191 (KRSCRKRLDGHNRRRRK) match the Bipartite nuclear localization signal motif. Residues 182 to 204 (LDGHNRRRRKPQPDPMNSASYLA) form a disordered region.

Expressed in young panicles.

The protein localises to the nucleus. Trans-acting factor that binds specifically to the consensus nucleotide sequence 5'-TNCGTACAA-3'. May be involved in panicle development. The chain is Squamosa promoter-binding-like protein 16 (SPL16) from Oryza sativa subsp. japonica (Rice).